The sequence spans 274 residues: Coagulation factor IX (274 aa).

Y23 carries the post-translational modification Sulfotyrosine. An N-linked (GlcNAc...) asparagine glycan is attached at N25. S26 is modified (phosphoserine). An N-linked (GlcNAc...) asparagine glycan is attached at N35. A glycan (O-linked (GalNAc...) threonine) is linked at T37. The N-linked (GlcNAc...) asparagine glycan is linked to N40. Residues 49–274 (VVGGEDAARG…IYTKVSRYEV (226 aa)) enclose the Peptidase S1 domain. The cysteines at positions 74 and 90 are disulfide-linked. H89 acts as the Charge relay system in catalysis. Ca(2+) is bound by residues E103, N105, E110, and E113. A glycan (N-linked (GlcNAc...) asparagine) is linked at N128. Residue D137 is the Charge relay system of the active site. 2 cysteine pairs are disulfide-bonded: C204/C218 and C229/C257. S233 (charge relay system) is an active-site residue.

Belongs to the peptidase S1 family. Heterodimer of a light chain and a heavy chain; disulfide-linked. Interacts (inactive and activated) with F11 (activated) in calcium-dependent manner. Interacts with SERPINC1. Post-translationally, activated by factor XIa, which excises the activation peptide. The propeptide can also be removed by snake venom protease. Activated by coagulation factor VIIa-tissue factor (F7-F3) complex in calcium-dependent manner.

It localises to the secreted. The catalysed reaction is Selective cleavage of Arg-|-Ile bond in factor X to form factor Xa.. Factor IX is a vitamin K-dependent plasma protein that participates in the intrinsic pathway of blood coagulation by converting factor X to its active form in the presence of Ca(2+) ions, phospholipids, and factor VIIIa. This Ovis aries (Sheep) protein is Coagulation factor IX (F9).